Reading from the N-terminus, the 77-residue chain is Small ribosomal subunit protein uS17 (77 aa).

This sequence belongs to the universal ribosomal protein uS17 family. As to quaternary structure, part of the 30S ribosomal subunit.

Its function is as follows. One of the primary rRNA binding proteins, it binds specifically to the 5'-end of 16S ribosomal RNA. The chain is Small ribosomal subunit protein uS17 from Rickettsia rickettsii (strain Sheila Smith).